The sequence spans 498 residues: ATP synthase subunit beta, chloroplastic (498 aa).

Residue 172 to 179 (GGAGVGKT) participates in ATP binding.

It belongs to the ATPase alpha/beta chains family. F-type ATPases have 2 components, CF(1) - the catalytic core - and CF(0) - the membrane proton channel. CF(1) has five subunits: alpha(3), beta(3), gamma(1), delta(1), epsilon(1). CF(0) has four main subunits: a(1), b(1), b'(1) and c(9-12).

It localises to the plastid. Its subcellular location is the chloroplast thylakoid membrane. It catalyses the reaction ATP + H2O + 4 H(+)(in) = ADP + phosphate + 5 H(+)(out). Its function is as follows. Produces ATP from ADP in the presence of a proton gradient across the membrane. The catalytic sites are hosted primarily by the beta subunits. The chain is ATP synthase subunit beta, chloroplastic from Agrostis stolonifera (Creeping bentgrass).